The sequence spans 430 residues: UDP-N-acetylmuramoylalanine--D-glutamate ligase (430 aa).

Residue 109-115 (GTDGKST) coordinates ATP.

The protein belongs to the MurCDEF family.

The protein resides in the cytoplasm. It catalyses the reaction UDP-N-acetyl-alpha-D-muramoyl-L-alanine + D-glutamate + ATP = UDP-N-acetyl-alpha-D-muramoyl-L-alanyl-D-glutamate + ADP + phosphate + H(+). Its pathway is cell wall biogenesis; peptidoglycan biosynthesis. Its function is as follows. Cell wall formation. Catalyzes the addition of glutamate to the nucleotide precursor UDP-N-acetylmuramoyl-L-alanine (UMA). The polypeptide is UDP-N-acetylmuramoylalanine--D-glutamate ligase (Thermotoga sp. (strain RQ2)).